The primary structure comprises 345 residues: Hydroxymethylglutaryl-CoA synthase (345 aa).

Aspartate 28 contacts (3S)-3-hydroxy-3-methylglutaryl-CoA. Glutamate 80 serves as the catalytic Proton donor/acceptor. (3S)-3-hydroxy-3-methylglutaryl-CoA is bound by residues cysteine 112 and threonine 153. The active-site Acyl-thioester intermediate is the cysteine 112. Arginine 199 contacts CoA. (3S)-3-hydroxy-3-methylglutaryl-CoA contacts are provided by threonine 201 and histidine 234. Histidine 234 functions as the Proton donor/acceptor in the catalytic mechanism. Lysine 239 provides a ligand contact to CoA. Positions 243, 266, and 296 each coordinate (3S)-3-hydroxy-3-methylglutaryl-CoA.

It belongs to the thiolase-like superfamily. Archaeal HMG-CoA synthase family. In terms of assembly, interacts with acetoacetyl-CoA thiolase that catalyzes the precedent step in the pathway and with a DUF35 protein. The acetoacetyl-CoA thiolase/HMG-CoA synthase complex channels the intermediate via a fused CoA-binding site, which allows for efficient coupling of the endergonic thiolase reaction with the exergonic HMGCS reaction.

It catalyses the reaction acetoacetyl-CoA + acetyl-CoA + H2O = (3S)-3-hydroxy-3-methylglutaryl-CoA + CoA + H(+). Its pathway is metabolic intermediate biosynthesis; (R)-mevalonate biosynthesis; (R)-mevalonate from acetyl-CoA: step 2/3. In terms of biological role, catalyzes the condensation of acetyl-CoA with acetoacetyl-CoA to form 3-hydroxy-3-methylglutaryl-CoA (HMG-CoA). Functions in the mevalonate (MVA) pathway leading to isopentenyl diphosphate (IPP), a key precursor for the biosynthesis of isoprenoid compounds that are building blocks of archaeal membrane lipids. The chain is Hydroxymethylglutaryl-CoA synthase from Methanocaldococcus jannaschii (strain ATCC 43067 / DSM 2661 / JAL-1 / JCM 10045 / NBRC 100440) (Methanococcus jannaschii).